The chain runs to 76 residues: Esculentin-2-ALb (76 aa).

A signal peptide spans 1–22 (MFTMKKSLLLLFFLGTISLSLC). A propeptide spanning residues 23–39 (EEERSADEDDGEKGVKR) is cleaved from the precursor. Residues C70 and C76 are joined by a disulfide bond.

In terms of tissue distribution, expressed by the skin glands.

The protein resides in the secreted. Antimicrobial peptide with activity against Gram-positive and Gram-negative bacteria and against fungi. Has been tested against S.aureus (MIC=1.25 ug/mL), B.pumilus (MIC=2.5 ug/mL), B.cereus (MIC=7.5 ug/mL), E.coli (MIC=12.5 ug/mL), B.dysenteriae (MIC=7.5 ug/mL), A.cacoaceticus (MIC=12.5 ug/mL), P.aeruginosa (MIC=50.0 ug/mL) and C.albicans (MIC=2.5 ug/mL). Also shows a weak hemolytic activity. This Amolops loloensis (Lolokou Sucker Frog) protein is Esculentin-2-ALb.